The sequence spans 1182 residues: Retrotransposable element SLACS 132 kDa protein (1182 aa).

Disordered stretches follow at residues 77-97 (GERSGGFETHPPRDPVTPRER), 163-220 (DVLD…STDQ), 317-339 (RRKRAAEREATEASAQQGIALRL), and 418-478 (RTAR…STAP). Residues 163–174 (DVLDEEEQDDDL) are compositionally biased toward acidic residues. A compositionally biased stretch (basic and acidic residues) spans 420-446 (ARREQQQQRGKDNQEEEDRQKKEEKSL). The span at 456–475 (SVRQGGQPSSSQPKRLNRWS) shows a compositional bias: polar residues. In terms of domain architecture, Reverse transcriptase spans 560-790 (NADVSMEVGR…TGDTGFGTAV (231 aa)).

The catalysed reaction is DNA(n) + a 2'-deoxyribonucleoside 5'-triphosphate = DNA(n+1) + diphosphate. This Trypanosoma brucei gambiense protein is Retrotransposable element SLACS 132 kDa protein.